Reading from the N-terminus, the 81-residue chain is ATP synthase subunit c (81 aa).

A run of 2 helical transmembrane segments spans residues 4–24 (MIAQGALIGGGLIMAGGAIGA) and 57–77 (VGLVEAAYFINLAFMALFVFA).

It belongs to the ATPase C chain family. As to quaternary structure, F-type ATPases have 2 components, F(1) - the catalytic core - and F(0) - the membrane proton channel. F(1) has five subunits: alpha(3), beta(3), gamma(1), delta(1), epsilon(1). F(0) has three main subunits: a(1), b(2) and c(10-14). The alpha and beta chains form an alternating ring which encloses part of the gamma chain. F(1) is attached to F(0) by a central stalk formed by the gamma and epsilon chains, while a peripheral stalk is formed by the delta and b chains.

Its subcellular location is the cell membrane. F(1)F(0) ATP synthase produces ATP from ADP in the presence of a proton or sodium gradient. F-type ATPases consist of two structural domains, F(1) containing the extramembraneous catalytic core and F(0) containing the membrane proton channel, linked together by a central stalk and a peripheral stalk. During catalysis, ATP synthesis in the catalytic domain of F(1) is coupled via a rotary mechanism of the central stalk subunits to proton translocation. In terms of biological role, key component of the F(0) channel; it plays a direct role in translocation across the membrane. A homomeric c-ring of between 10-14 subunits forms the central stalk rotor element with the F(1) delta and epsilon subunits. The polypeptide is ATP synthase subunit c (Mycobacterium leprae (strain TN)).